Consider the following 148-residue polypeptide: Histone H2A-like 3 (148 aa).

The interval 101–128 (DDTHSQVEEMPQSEEEEEEEEEKEEEMV) is disordered. Residues 111–127 (PQSEEEEEEEEEKEEEM) are compositionally biased toward acidic residues.

Belongs to the histone H2A family. In terms of assembly, the nucleosome is a histone octamer containing two molecules each of H2A, H2B, H3 and H4 assembled in one H3-H4 heterotetramer and two H2A-H2B heterodimers. The octamer wraps approximately 147 bp of DNA.

It localises to the nucleus. The protein localises to the chromosome. Its function is as follows. Core component of nucleosome. Nucleosomes wrap and compact DNA into chromatin, limiting DNA accessibility to the cellular machineries which require DNA as a template. Histones thereby play a central role in transcription regulation, DNA repair, DNA replication and chromosomal stability. DNA accessibility is regulated via a complex set of post-translational modifications of histones, also called histone code, and nucleosome remodeling. In Homo sapiens (Human), this protein is Histone H2A-like 3.